The sequence spans 465 residues: MLRSNLCRGSRILARLTTTPRTYTSAATAAAANRGHIIKTYFNRDSTTITFSMEESSKPVSVCFNNVFLRDASHSAKLVTTGELYHNEKLTAPQDIQISEDGKSLVVKWKDGGHHQFPLQFFIDYKGSSFVSPATRKQESRYRPQLWNKRILKDNVKDLLSVSYNEFIDPKDDSKLFQTLVNLQKFGIAFISGTPSSSSEGLTIQKICERIGPIRSTVHGEGTFDVNASQATSVNAHYANKDLPLHTDLPFLENVPGFQILQSLPATEGEDPNTRPMNYFVDAFYATRNVRESDFEAYEALQIVPVNYIYENGDKRYYQSKPLIEHHDINEDNTLLGNYEALIKCINYSPPYQAPFTFGIYDKPSDLNNNLDLNLITTPAKLTERFLFKSFIRGLNLFESHINDFNNQFRLQLPENCCVIFNNRRILHANSLTSSNQQWLKGCYFDSDTFKSKLKFLEEKFPHDK.

The transit peptide at 1-16 (MLRSNLCRGSRILARL) directs the protein to the mitochondrion. H246, D248, and H428 together coordinate Fe cation.

It belongs to the gamma-BBH/TMLD family. Fe(2+) serves as cofactor. It depends on L-ascorbate as a cofactor.

It is found in the mitochondrion. The protein is Probable oxidoreductase AIM17 (AIM17) of Saccharomyces cerevisiae (strain ATCC 204508 / S288c) (Baker's yeast).